Consider the following 388-residue polypeptide: MNLHEYQAKELLAGYGLPVQGGILAHNGEEAAAAYDKLGGKFAVVKAQVHAGGRGKAGGVKVVKSREEAKEVAESLIGTNLVTYQTDANGQPVNSVLVCEDMYPVQTELYLGAVVDRSTRRITFMASTEGGVEIEKVAAETPEKIFKVTVDPLVGLQPCQAREVAFQLGLKDKQINEFVKLMTGAYKAFVENDFALFEVNPLAVRENGALACVDGKIGIDSNALYRLPKIAELRDKSQENERELKASEFDLNYVALEGNIGCMVNGAGLAMATMDIIKLKGGQPANFLDVGGGATKDRVVEAFKLILEDKSVQGVLINIFGGIVRCDMIAEAIVAAVKEINVDVPVVVRLEGNNAELGAKILNESGLKLTSADGLNDAAEKIVAAVNA.

Positions 9 to 245 (KELLAGYGLP…KSQENERELK (237 aa)) constitute an ATP-grasp domain. Residues K46, 53 to 55 (GRG), E100, Y103, and E108 contribute to the ATP site. The Mg(2+) site is built by N200 and D214. Substrate contacts are provided by residues N265 and 322-324 (GIV).

This sequence belongs to the succinate/malate CoA ligase beta subunit family. Heterotetramer of two alpha and two beta subunits. It depends on Mg(2+) as a cofactor.

The enzyme catalyses succinate + ATP + CoA = succinyl-CoA + ADP + phosphate. The catalysed reaction is GTP + succinate + CoA = succinyl-CoA + GDP + phosphate. Its pathway is carbohydrate metabolism; tricarboxylic acid cycle; succinate from succinyl-CoA (ligase route): step 1/1. In terms of biological role, succinyl-CoA synthetase functions in the citric acid cycle (TCA), coupling the hydrolysis of succinyl-CoA to the synthesis of either ATP or GTP and thus represents the only step of substrate-level phosphorylation in the TCA. The beta subunit provides nucleotide specificity of the enzyme and binds the substrate succinate, while the binding sites for coenzyme A and phosphate are found in the alpha subunit. The sequence is that of Succinate--CoA ligase [ADP-forming] subunit beta from Neisseria meningitidis serogroup C / serotype 2a (strain ATCC 700532 / DSM 15464 / FAM18).